The following is a 90-amino-acid chain: Protein LURE 1.4 (90 aa).

Residues 1–19 (MKCPSIFLTLLIFVSSCTS) form the signal peptide. Asparagine 23 carries N-linked (GlcNAc...) asparagine glycosylation. Disulfide bonds link cysteine 58-cysteine 75, cysteine 61-cysteine 82, and cysteine 65-cysteine 84. The interval 67–87 (RRGKYIRTCSFERKLCRCSIS) is PRK6 binding.

It belongs to the DEFL family. Binds to PRK6 LRRs. In terms of tissue distribution, expressed in the pistil. Detected exclusively in the synergid cells.

It is found in the secreted. Pollen tube attractants guiding pollen tubes to the ovular micropyle. The polypeptide is Protein LURE 1.4 (Arabidopsis thaliana (Mouse-ear cress)).